The following is a 183-amino-acid chain: Endoribonuclease YbeY (183 aa).

H118, H122, and H128 together coordinate Zn(2+). Residues 156 to 183 (EREQAQRSADSAVLGAVGLEEQDGPGTH) are disordered.

The protein belongs to the endoribonuclease YbeY family. It depends on Zn(2+) as a cofactor.

The protein resides in the cytoplasm. In terms of biological role, single strand-specific metallo-endoribonuclease involved in late-stage 70S ribosome quality control and in maturation of the 3' terminus of the 16S rRNA. The sequence is that of Endoribonuclease YbeY from Saccharopolyspora erythraea (strain ATCC 11635 / DSM 40517 / JCM 4748 / NBRC 13426 / NCIMB 8594 / NRRL 2338).